A 250-amino-acid chain; its full sequence is Triosephosphate isomerase, glycosomal (250 aa).

2 residues coordinate substrate: asparagine 11 and lysine 13. Histidine 95 acts as the Electrophile in catalysis. Glutamate 167 serves as the catalytic Proton acceptor.

Belongs to the triosephosphate isomerase family. As to quaternary structure, homodimer.

Its subcellular location is the glycosome. It catalyses the reaction D-glyceraldehyde 3-phosphate = dihydroxyacetone phosphate. Its pathway is carbohydrate biosynthesis; gluconeogenesis. It participates in carbohydrate degradation; glycolysis; D-glyceraldehyde 3-phosphate from glycerone phosphate: step 1/1. The sequence is that of Triosephosphate isomerase, glycosomal from Trypanosoma brucei brucei.